The sequence spans 944 residues: Protein unc-45 homolog A (944 aa).

The tract at residues 1–25 (MTVSGPETPEPRPSDPGASSAEQLR) is disordered. TPR repeat units follow at residues 21 to 54 (AEQL…GATP), 58 to 91 (AILH…DGGD), and 92 to 125 (VKAL…EPKN). N6-acetyllysine is present on K70. Position 483 is an N6-acetyllysine (K483).

As to quaternary structure, interacts with PGR isoforms A and B as well as with NR3C1 in the absence of ligand, and with HSP90AB1. Binding to HSP90AB1 involves 2 UNC45A monomers per HSP90AB1 dimer. As to expression, detected in spleen, bone marrow, lung and ovary, and at lower levels in testis, kidney, heart and brain (at protein level). Ubiquitous. Detected in uterus, large intestine, kidney, spleen, lung, brain, liver and ovary.

The protein localises to the cytoplasm. Its subcellular location is the perinuclear region. It is found in the nucleus. In terms of biological role, may act as co-chaperone for HSP90 (Potential). Prevents the stimulation of HSP90AB1 ATPase activity by AHSA1. Positive factor in promoting PGR function in the cell. May be necessary for proper folding of myosin (Potential). Necessary for normal cell proliferation. Necessary for normal myotube formation and myosin accumulation during muscle cell development. May play a role in erythropoiesis in stroma cells in the spleen. This Mus musculus (Mouse) protein is Protein unc-45 homolog A (Unc45a).